The sequence spans 363 residues: NAD(P)H-quinone oxidoreductase subunit 1, chloroplastic (363 aa).

Helical transmembrane passes span 26–46 (IIWI…GVLV), 98–118 (FSIG…VIPF), 127–147 (LTIG…GLLM), 246–266 (TEYS…NLLV), 268–288 (SLFV…YIFV), 300–320 (VFGP…FLFI), and 336–356 (LLNL…LLTT).

This sequence belongs to the complex I subunit 1 family. NDH is composed of at least 16 different subunits, 5 of which are encoded in the nucleus.

It localises to the plastid. It is found in the chloroplast thylakoid membrane. The catalysed reaction is a plastoquinone + NADH + (n+1) H(+)(in) = a plastoquinol + NAD(+) + n H(+)(out). It catalyses the reaction a plastoquinone + NADPH + (n+1) H(+)(in) = a plastoquinol + NADP(+) + n H(+)(out). Functionally, NDH shuttles electrons from NAD(P)H:plastoquinone, via FMN and iron-sulfur (Fe-S) centers, to quinones in the photosynthetic chain and possibly in a chloroplast respiratory chain. The immediate electron acceptor for the enzyme in this species is believed to be plastoquinone. Couples the redox reaction to proton translocation, and thus conserves the redox energy in a proton gradient. The protein is NAD(P)H-quinone oxidoreductase subunit 1, chloroplastic of Coffea arabica (Arabian coffee).